A 114-amino-acid chain; its full sequence is Nucleoid-associated protein NT01CX_0824 (114 aa).

It belongs to the YbaB/EbfC family. As to quaternary structure, homodimer.

It localises to the cytoplasm. Its subcellular location is the nucleoid. Its function is as follows. Binds to DNA and alters its conformation. May be involved in regulation of gene expression, nucleoid organization and DNA protection. This chain is Nucleoid-associated protein NT01CX_0824, found in Clostridium novyi (strain NT).